The chain runs to 222 residues: 3-demethoxyubiquinol 3-hydroxylase (222 aa).

Glutamate 71, glutamate 101, histidine 104, glutamate 153, glutamate 185, and histidine 188 together coordinate Fe cation.

It belongs to the COQ7 family. Fe cation serves as cofactor.

It is found in the cell membrane. It catalyses the reaction a 5-methoxy-2-methyl-3-(all-trans-polyprenyl)benzene-1,4-diol + AH2 + O2 = a 3-demethylubiquinol + A + H2O. It functions in the pathway cofactor biosynthesis; ubiquinone biosynthesis. Its function is as follows. Catalyzes the hydroxylation of 2-nonaprenyl-3-methyl-6-methoxy-1,4-benzoquinol during ubiquinone biosynthesis. The protein is 3-demethoxyubiquinol 3-hydroxylase of Bordetella bronchiseptica (strain ATCC BAA-588 / NCTC 13252 / RB50) (Alcaligenes bronchisepticus).